The sequence spans 52 residues: U-scutigerotoxin(01)-Tl1a (52 aa).

Residues 1–25 form the signal peptide; it reads MLAKAMSLLMMFLLVLVIGSVMVSA.

The protein belongs to the scutigerotoxin-01 family. In terms of processing, contains 1 disulfide bond. As to expression, expressed by the venom gland.

The protein localises to the secreted. This chain is U-scutigerotoxin(01)-Tl1a, found in Thereuopoda longicornis (Long-legged centipede).